Here is a 293-residue protein sequence, read N- to C-terminus: MHPRFAKPLDTLSAPLKAALLPMLGDDFQARFTPDQVATLKAATGLDDRALRLALLPLAAACSVAPISKFFVGAIACGLSGNWYFGANMEFAGQGLFHSVHAEQSAISNAWLGGETGISEITVNYTPCGHCRQFMNELSTAKILKVSLPDDLSALQSFLPHSFGPADLDITDALMSPQAHDELTLVSDDPLWQAALAAARQSYAPYSQGYAAVALQFADGRIFCGRYAENAAFNPSLPPMQMACAHAVLGGEDLATIRRAVLLESKDGQISQQDSARATLKALGSVELEYQAV.

CMP/dCMP-type deaminase domains are found at residues 47-166 (DDRA…FGPA) and 186-293 (VSDD…YQAV). 88-90 (NME) contributes to the substrate binding site. Position 101 (H101) interacts with Zn(2+). Residue E103 is the Proton donor of the active site. Zn(2+) contacts are provided by C128 and C131.

It belongs to the cytidine and deoxycytidylate deaminase family. Homodimer. Zn(2+) is required as a cofactor.

The enzyme catalyses cytidine + H2O + H(+) = uridine + NH4(+). The catalysed reaction is 2'-deoxycytidine + H2O + H(+) = 2'-deoxyuridine + NH4(+). In terms of biological role, this enzyme scavenges exogenous and endogenous cytidine and 2'-deoxycytidine for UMP synthesis. The polypeptide is Cytidine deaminase (Aeromonas hydrophila subsp. hydrophila (strain ATCC 7966 / DSM 30187 / BCRC 13018 / CCUG 14551 / JCM 1027 / KCTC 2358 / NCIMB 9240 / NCTC 8049)).